The sequence spans 522 residues: Lysine--tRNA ligase (522 aa).

The 'HIGH' region motif lies at 44 to 52 (PSGLPHIGT). A 'KMSKS' region motif is present at residues 290–294 (KISKS). An ATP-binding site is contributed by Lys293.

This sequence belongs to the class-I aminoacyl-tRNA synthetase family.

It localises to the cytoplasm. It carries out the reaction tRNA(Lys) + L-lysine + ATP = L-lysyl-tRNA(Lys) + AMP + diphosphate. The polypeptide is Lysine--tRNA ligase (Rickettsia massiliae (strain Mtu5)).